The primary structure comprises 242 residues: Serine hydrolase cnsH (242 aa).

Active-site charge relay system residues include Ser-56, Asp-138, and His-216.

It belongs to the AB hydrolase 3 family.

Its pathway is alkaloid biosynthesis. Its function is as follows. Serine hydrolase; part of the gene cluster that mediates the biosynthesis of communesins, a prominent class of indole alkaloids with great potential as pharmaceuticals. Communesins are biosynthesized by the coupling of tryptamine and aurantioclavine, two building blocks derived from L-tryptophan. The L-tryptophan decarboxylase cnsB converts L-tryptophan to tryptamine, whereas the tryptophan dimethylallyltransferase cnsF converts L-tryptophan to 4-dimethylallyl tryptophan which is further transformed to aurantioclavine by the aurantioclavine synthase cnsA, probably aided by the catalase cnsD. The cytochrome P450 monooxygenase cnsC catalyzes the heterodimeric coupling between the two different indole moieties, tryptamine and aurantioclavine, to construct vicinal quaternary stereocenters and yield the heptacyclic communesin scaffold. The O-methyltransferase cnsE then methylates the communesin scaffold to produce communesin K, the simplest characterized communesin that contains the heptacyclic core. The dioxygenase cnsJ converts communesin K into communesin I. Acylation to introduce the hexadienyl group at position N16 of communesin I by the acyltransferase cnsK leads to the production of communesin B. The hexadienyl group is produced by the highly reducing polyketide synthase cnsI, before being hydrolytically removed from cnsI by the serine hydrolase cnsH, converted into hexadienyl-CoA by the CoA ligase cnsG, and then transferred to communesin I by cnsK. Surprisingly, cnsK may also be a promiscuous acyltransferase that can tolerate a range of acyl groups, including acetyl-, propionyl-, and butyryl-CoA, which lead to communesins A, G and H respectively. The roles of the alpha-ketoglutarate-dependent dioxygenases cnsM and cnsP have still to be determined. The sequence is that of Serine hydrolase cnsH from Penicillium expansum (Blue mold rot fungus).